A 741-amino-acid polypeptide reads, in one-letter code: Nuclear pore complex protein Nup88 (741 aa).

Ala2 bears the N-acetylalanine mark. Phosphoserine is present on residues Ser35, Ser50, Ser379, Ser437, Ser442, and Ser517. A Phosphothreonine modification is found at Thr525. A Phosphoserine modification is found at Ser540. Residues 585–651 are a coiled coil; it reads EEIQRRVKLL…KLLHSFHSEL (67 aa). Phosphoserine is present on Ser698.

Interacts with NUP214/CAN. Interacts with NUP62 and NUP98. As to expression, ubiquitous.

The protein localises to the nucleus. It is found in the nuclear pore complex. Its function is as follows. Component of nuclear pore complex. The chain is Nuclear pore complex protein Nup88 (NUP88) from Homo sapiens (Human).